The primary structure comprises 421 residues: Serine hydroxymethyltransferase (421 aa).

Residues L121 and 125 to 127 (GHL) each bind (6S)-5,6,7,8-tetrahydrofolate. Residue K230 is modified to N6-(pyridoxal phosphate)lysine. Position 355–357 (355–357 (SPF)) interacts with (6S)-5,6,7,8-tetrahydrofolate.

Belongs to the SHMT family. In terms of assembly, homodimer. Pyridoxal 5'-phosphate serves as cofactor.

The protein localises to the cytoplasm. It carries out the reaction (6R)-5,10-methylene-5,6,7,8-tetrahydrofolate + glycine + H2O = (6S)-5,6,7,8-tetrahydrofolate + L-serine. Its pathway is one-carbon metabolism; tetrahydrofolate interconversion. It participates in amino-acid biosynthesis; glycine biosynthesis; glycine from L-serine: step 1/1. Functionally, catalyzes the reversible interconversion of serine and glycine with tetrahydrofolate (THF) serving as the one-carbon carrier. This reaction serves as the major source of one-carbon groups required for the biosynthesis of purines, thymidylate, methionine, and other important biomolecules. Also exhibits THF-independent aldolase activity toward beta-hydroxyamino acids, producing glycine and aldehydes, via a retro-aldol mechanism. The sequence is that of Serine hydroxymethyltransferase from Cellvibrio japonicus (strain Ueda107) (Pseudomonas fluorescens subsp. cellulosa).